Reading from the N-terminus, the 943-residue chain is Centromere protein C (943 aa).

Residue K45 forms a Glycyl lysine isopeptide (Lys-Gly) (interchain with G-Cter in SUMO2) linkage. The tract at residues 70–91 (CIQSPSKECQKSHPKSVPVSSK) is disordered. Phosphoserine is present on residues S73 and S96. K119 participates in a covalent cross-link: Glycyl lysine isopeptide (Lys-Gly) (interchain with G-Cter in SUMO2). T130 carries the phosphothreonine modification. A Glycyl lysine isopeptide (Lys-Gly) (interchain with G-Cter in SUMO2) cross-link involves residue K134. The residue at position 146 (S146) is a Phosphoserine. Residue K180 forms a Glycyl lysine isopeptide (Lys-Gly) (interchain with G-Cter in SUMO2) linkage. Residue T183 is modified to Phosphothreonine. Position 189 is a phosphoserine (S189). Glycyl lysine isopeptide (Lys-Gly) (interchain with G-Cter in SUMO2) cross-links involve residues K212 and K217. Over residues 224–239 (VSDEEDKTSEGQERKP) the composition is skewed to basic and acidic residues. Residues 224-250 (VSDEEDKTSEGQERKPSGSSQNRIRDS) form a disordered region. A Phosphoserine modification is found at S225. Residues K238 and K260 each participate in a glycyl lysine isopeptide (Lys-Gly) (interchain with G-Cter in SUMO2) cross-link. A Nuclear localization signal motif is present at residues 259-273 (KKSFSTLFLETVKRK). A Phosphoserine modification is found at S261. Residues K271, K273, and K297 each participate in a glycyl lysine isopeptide (Lys-Gly) (interchain with G-Cter in SUMO2) cross-link. 4 positions are modified to phosphoserine: S316, S333, S376, and S397. The disordered stretch occupies residues 358–377 (LANDKHSHKPHPVETSQPSD). Residues 403–513 (YSKNAEKPSR…SKNKLVPEEV (111 aa)) are disordered. Basic residues predominate over residues 412–426 (RSKRTIKQKQRRKFM). Basic and acidic residues-rich tracts occupy residues 438 to 463 (QSKD…RNME) and 488 to 510 (TRKD…KLVP). S439 is subject to Phosphoserine. Residue K440 forms a Glycyl lysine isopeptide (Lys-Gly) (interchain with G-Cter in SUMO2) linkage. The Nuclear localization signal motif lies at 484 to 499 (KKSSTRKDKEESKKKR). At S528 the chain carries Phosphoserine. K534 is covalently cross-linked (Glycyl lysine isopeptide (Lys-Gly) (interchain with G-Cter in SUMO2)). 2 disordered regions span residues 537–587 (ESPV…ATKG) and 632–717 (DCSR…KQSK). A Phosphoserine modification is found at S538. The short motif at 558 to 574 (RKSTKKTNQSSKNIRKK) is the Nuclear localization signal element. Residues 570 to 583 (NIRKKTIPLKRQKT) show a composition bias toward basic residues. The span at 633 to 672 (CSRSTRSSKNEDNIMTAQNVPLKPQTSGYTCNIPTESNLD) shows a compositional bias: polar residues. Residue K677 forms a Glycyl lysine isopeptide (Lys-Gly) (interchain with G-Cter in SUMO2) linkage. 3 positions are modified to phosphoserine: S684, S709, and S710. The segment covering 706-715 (VHGSSDDSKQ) has biased composition (basic and acidic residues). K727 participates in a covalent cross-link: Glycyl lysine isopeptide (Lys-Gly) (interchain with G-Cter in SUMO2). T734 bears the Phosphothreonine mark. An MIF2 homology domain II region spans residues 737–759 (VRRTKRTRLKPLEYWRGERIDYQ). Residues S763 and S773 each carry the phosphoserine modification. The short motif at 780 to 798 (KRKAKENIGKVNKKSNKKR) is the Nuclear localization signal element. A Glycyl lysine isopeptide (Lys-Gly) (interchain with G-Cter in SUMO2) cross-link involves residue K807. An MIF2 homology domain III region spans residues 890 to 943 (LVFYVNFGDLLCTLHETPYILSTGDSFYVPSGNYYNIKNLRNEESVLLFTQIKR).

Belongs to the CENP-C/MIF2 family. Oligomer. Component of the CENPA-NAC complex, at least composed of CENPA, CENPC, CENPH, CENPM, CENPN, CENPT and CENPU. The CENPA-NAC complex interacts with the CENPA-CAD complex, composed of CENPI, CENPK, CENPL, CENPO, CENPP, CENPQ, CENPR and CENPS. Binds to DAXX. Interacts with DNMT3B. Interacts directly with CENPA. Identified in a centromere complex containing histones H2A, H2B and H4, and at least CENPA, CENPB, CENPC, CENPT, CENPN, HJURP, SUPT16H, SSRP1 and RSF1. Interacts with MEIKIN.

It is found in the nucleus. The protein resides in the chromosome. The protein localises to the centromere. It localises to the kinetochore. Functionally, component of the CENPA-NAC (nucleosome-associated) complex, a complex that plays a central role in assembly of kinetochore proteins, mitotic progression and chromosome segregation. The CENPA-NAC complex recruits the CENPA-CAD (nucleosome distal) complex and may be involved in incorporation of newly synthesized CENPA into centromeres. CENPC recruits DNA methylation and DNMT3B to both centromeric and pericentromeric satellite repeats and regulates the histone code in these regions. This is Centromere protein C (CENPC) from Homo sapiens (Human).